The sequence spans 381 residues: Chaperone protein DnaJ (381 aa).

The J domain occupies 5–70 (DYYEVLGCDR…QKRGAYDRYG (66 aa)). The segment at 136-214 (GKTAQISIPT…CGGAGRVTRE (79 aa)) adopts a CR-type zinc-finger fold. 8 residues coordinate Zn(2+): C149, C152, C166, C169, C188, C191, C202, and C205. CXXCXGXG motif repeat units lie at residues 149-156 (CEVCSGSG), 166-173 (CRTCNGAG), 188-195 (CPSCQGRG), and 202-209 (CPNCGGAG).

The protein belongs to the DnaJ family. As to quaternary structure, homodimer. Zn(2+) serves as cofactor.

Its subcellular location is the cytoplasm. Participates actively in the response to hyperosmotic and heat shock by preventing the aggregation of stress-denatured proteins and by disaggregating proteins, also in an autonomous, DnaK-independent fashion. Unfolded proteins bind initially to DnaJ; upon interaction with the DnaJ-bound protein, DnaK hydrolyzes its bound ATP, resulting in the formation of a stable complex. GrpE releases ADP from DnaK; ATP binding to DnaK triggers the release of the substrate protein, thus completing the reaction cycle. Several rounds of ATP-dependent interactions between DnaJ, DnaK and GrpE are required for fully efficient folding. Also involved, together with DnaK and GrpE, in the DNA replication of plasmids through activation of initiation proteins. In Azorhizobium caulinodans (strain ATCC 43989 / DSM 5975 / JCM 20966 / LMG 6465 / NBRC 14845 / NCIMB 13405 / ORS 571), this protein is Chaperone protein DnaJ.